We begin with the raw amino-acid sequence, 130 residues long: Putative F-box protein At1g77880 (130 aa).

In terms of domain architecture, F-box spans 18-64 (KVSIPYLPDDLLLNCLARISRLYYPTLSLVSKRFRSLLASTELYETR).

The protein is Putative F-box protein At1g77880 of Arabidopsis thaliana (Mouse-ear cress).